The chain runs to 126 residues: Bactofilin BacO (126 aa).

It belongs to the bactofilin family. Interacts with BacN and probably also BacP, the 3 proteins colocalize as an extended structure. Interacts with PadC.

It localises to the cytoplasm. It is found in the cytoskeleton. Functionally, a non-essential component of the chromosome segregation machinery. Positions the ParA-ParB-parS chromosome segregation machinery within the cell; BacP seems to be the most important bactofilin in this process. Forms a heteropolymeric, subpolar scaffold in the cell; BacP probably forms the core, BacO contributes to position and integrity while BacN does not seem to contribute to assembly. The polypeptide is Bactofilin BacO (Myxococcus xanthus (strain DK1622)).